Here is a 390-residue protein sequence, read N- to C-terminus: Putative nickel insertion protein (390 aa).

The protein belongs to the LarC family.

This is Putative nickel insertion protein from Geotalea daltonii (strain DSM 22248 / JCM 15807 / FRC-32) (Geobacter daltonii).